A 386-amino-acid chain; its full sequence is Aspergillopepsin-1 (386 aa).

The N-terminal stretch at 1-20 (MVVFSKVAAAAFGLSAVASA) is a signal peptide. Positions 21–69 (MPAAPPRQGFTINQLTRAIPKRTINLPAIYANALSKYGGNVPPHIQDAM) are cleaved as a propeptide — activation peptide. Positions 85-383 (YLTPVAVGGT…DSEGPQLGFA (299 aa)) constitute a Peptidase A1 domain. The active site involves aspartate 101. Residue asparagine 130 is glycosylated (N-linked (GlcNAc...) asparagine). Residue aspartate 275 is part of the active site. A disulfide bond links cysteine 311 and cysteine 346.

Belongs to the peptidase A1 family. In terms of assembly, monomer.

The protein localises to the secreted. The catalysed reaction is Hydrolysis of proteins with broad specificity. Generally favors hydrophobic residues in P1 and P1', but also accepts Lys in P1, which leads to activation of trypsinogen. Does not clot milk.. Secreted aspartic endopeptidase that allows assimilation of proteinaceous substrates. The scissile peptide bond is attacked by a nucleophilic water molecule activated by two aspartic residues in the active site. Shows a broad primary substrate specificity. Favors hydrophobic residues at the P1 and P1' positions, but also accepts a lysine residue in the P1 position, leading to the activation of trypsinogen and chymotrypsinogen A. The polypeptide is Aspergillopepsin-1 (Emericella nidulans (strain FGSC A4 / ATCC 38163 / CBS 112.46 / NRRL 194 / M139) (Aspergillus nidulans)).